Here is a 78-residue protein sequence, read N- to C-terminus: Putative DNA-binding protein MT0521 (78 aa).

The H-T-H motif DNA-binding region spans 24–45 (LLTVAEVAALMRVSKMTVYRLV).

The protein is Putative DNA-binding protein MT0521 of Mycobacterium tuberculosis (strain CDC 1551 / Oshkosh).